Reading from the N-terminus, the 262-residue chain is Ribonuclease 3 (262 aa).

The RNase III domain maps to 18-141 (LATFLKNLDI…LVGAIYEDMG (124 aa)). Position 59 (E59) interacts with Mg(2+). D63 is an active-site residue. Residues D127 and E130 each coordinate Mg(2+). E130 is an active-site residue.

Belongs to the ribonuclease III family. As to quaternary structure, homodimer. Mg(2+) serves as cofactor.

It is found in the cytoplasm. The enzyme catalyses Endonucleolytic cleavage to 5'-phosphomonoester.. Digests double-stranded RNA. Involved in the processing of primary rRNA transcript to yield the immediate precursors to the large and small rRNAs (23S and 16S). Processes some mRNAs, and tRNAs when they are encoded in the rRNA operon. Processes pre-crRNA and tracrRNA of type II CRISPR loci if present in the organism. This chain is Ribonuclease 3, found in Mycoplasma genitalium (strain ATCC 33530 / DSM 19775 / NCTC 10195 / G37) (Mycoplasmoides genitalium).